A 355-amino-acid chain; its full sequence is Heat-inducible transcription repressor HrcA (355 aa).

The protein belongs to the HrcA family.

Functionally, negative regulator of class I heat shock genes (grpE-dnaK-dnaJ and groELS operons). Prevents heat-shock induction of these operons. The polypeptide is Heat-inducible transcription repressor HrcA (Prosthecochloris aestuarii (strain DSM 271 / SK 413)).